Consider the following 560-residue polypeptide: Putative transport protein ESA_02488 (560 aa).

The next 5 helical transmembrane spans lie at 8 to 28 (LLNG…LCLG), 32 to 52 (LGSV…LLGQ), 66 to 86 (FMLF…SIFF), 91 to 111 (NYLM…LGLG), and 158 to 178 (HLSL…IFGA). RCK C-terminal domains lie at 200-288 (RGLD…SFRN) and 292-373 (VFDR…RIGF). 5 helical membrane passes run 383-403 (LLAF…TFQF), 406-426 (FSFG…LGFL), 447-467 (FGLM…IGHG), 475-495 (MLFA…LFGA), and 539-559 (YAIA…IWPG).

It belongs to the AAE transporter (TC 2.A.81) family. YbjL subfamily.

It localises to the cell membrane. This Cronobacter sakazakii (strain ATCC BAA-894) (Enterobacter sakazakii) protein is Putative transport protein ESA_02488.